The chain runs to 283 residues: Pantothenate synthetase (283 aa).

Position 26-33 (26-33 (MGNLHAGH)) interacts with ATP. Residue His-33 is the Proton donor of the active site. Gln-57 serves as a coordination point for (R)-pantoate. Gln-57 contributes to the beta-alanine binding site. 144–147 (GRKD) lines the ATP pocket. Gln-150 serves as a coordination point for (R)-pantoate. ATP-binding positions include Leu-173 and 181-184 (MSSR).

Belongs to the pantothenate synthetase family. As to quaternary structure, homodimer.

The protein localises to the cytoplasm. The catalysed reaction is (R)-pantoate + beta-alanine + ATP = (R)-pantothenate + AMP + diphosphate + H(+). It participates in cofactor biosynthesis; (R)-pantothenate biosynthesis; (R)-pantothenate from (R)-pantoate and beta-alanine: step 1/1. Functionally, catalyzes the condensation of pantoate with beta-alanine in an ATP-dependent reaction via a pantoyl-adenylate intermediate. This Thiobacillus denitrificans (strain ATCC 25259 / T1) protein is Pantothenate synthetase.